Here is a 387-residue protein sequence, read N- to C-terminus: Phosphoglycerate kinase (387 aa).

Residues 21 to 23 (DLN), Arg36, 59 to 62 (HLGR), Arg113, and Arg146 contribute to the substrate site. ATP-binding positions include Lys197, Glu314, and 340–343 (GGDT).

It belongs to the phosphoglycerate kinase family. As to quaternary structure, monomer.

It is found in the cytoplasm. The enzyme catalyses (2R)-3-phosphoglycerate + ATP = (2R)-3-phospho-glyceroyl phosphate + ADP. It participates in carbohydrate degradation; glycolysis; pyruvate from D-glyceraldehyde 3-phosphate: step 2/5. This is Phosphoglycerate kinase from Sodalis glossinidius (strain morsitans).